Here is a 325-residue protein sequence, read N- to C-terminus: L-lactate dehydrogenase (325 aa).

NAD(+) contacts are provided by residues Val-19, Asp-40, Lys-45, Tyr-70, and 84–85; that span reads GA. Substrate contacts are provided by Gln-87 and Arg-93. Residues Thr-106, 123–125, and Ser-148 contribute to the NAD(+) site; that span reads AAN. Residue 125 to 128 coordinates substrate; the sequence is NPVD. Position 153 to 156 (153 to 156) interacts with substrate; sequence DSAR. The beta-D-fructose 1,6-bisphosphate site is built by Arg-158 and His-173. Residue His-180 is the Proton acceptor of the active site. Tyr-225 bears the Phosphotyrosine mark. Thr-234 provides a ligand contact to substrate.

It belongs to the LDH/MDH superfamily. LDH family. As to quaternary structure, homotetramer.

Its subcellular location is the cytoplasm. It catalyses the reaction (S)-lactate + NAD(+) = pyruvate + NADH + H(+). Its pathway is fermentation; pyruvate fermentation to lactate; (S)-lactate from pyruvate: step 1/1. With respect to regulation, allosterically activated by fructose 1,6-bisphosphate (FBP). Its function is as follows. Catalyzes the conversion of lactate to pyruvate. This chain is L-lactate dehydrogenase, found in Latilactobacillus sakei (Lactobacillus sakei).